Consider the following 473-residue polypeptide: Adenosylhomocysteinase (473 aa).

3 residues coordinate substrate: Thr-60, Asp-135, and Glu-197. An NAD(+)-binding site is contributed by 198-200 (TTT). The substrate site is built by Lys-227 and Asp-231. NAD(+) is bound by residues Asn-232, 261 to 266 (GFGDVG), Glu-284, Asn-319, 340 to 342 (IGH), and Asn-385.

It belongs to the adenosylhomocysteinase family. NAD(+) serves as cofactor.

It localises to the cytoplasm. The enzyme catalyses S-adenosyl-L-homocysteine + H2O = L-homocysteine + adenosine. The protein operates within amino-acid biosynthesis; L-homocysteine biosynthesis; L-homocysteine from S-adenosyl-L-homocysteine: step 1/1. In terms of biological role, may play a key role in the regulation of the intracellular concentration of adenosylhomocysteine. The sequence is that of Adenosylhomocysteinase from Bradyrhizobium sp. (strain BTAi1 / ATCC BAA-1182).